The chain runs to 199 residues: Peptidyl-tRNA hydrolase (199 aa).

Tyr-15 is a tRNA binding site. His-20 acts as the Proton acceptor in catalysis. Residues Tyr-66, Asn-68, and Asn-114 each contribute to the tRNA site.

It belongs to the PTH family. Monomer.

It localises to the cytoplasm. It carries out the reaction an N-acyl-L-alpha-aminoacyl-tRNA + H2O = an N-acyl-L-amino acid + a tRNA + H(+). Its function is as follows. Hydrolyzes ribosome-free peptidyl-tRNAs (with 1 or more amino acids incorporated), which drop off the ribosome during protein synthesis, or as a result of ribosome stalling. Catalyzes the release of premature peptidyl moieties from peptidyl-tRNA molecules trapped in stalled 50S ribosomal subunits, and thus maintains levels of free tRNAs and 50S ribosomes. The protein is Peptidyl-tRNA hydrolase of Burkholderia multivorans (strain ATCC 17616 / 249).